The primary structure comprises 310 residues: Ribosomal RNA small subunit methyltransferase H (310 aa).

S-adenosyl-L-methionine is bound by residues 33 to 35 (AGH), D53, F79, D100, and Q107.

It belongs to the methyltransferase superfamily. RsmH family.

The protein localises to the cytoplasm. It carries out the reaction cytidine(1402) in 16S rRNA + S-adenosyl-L-methionine = N(4)-methylcytidine(1402) in 16S rRNA + S-adenosyl-L-homocysteine + H(+). Functionally, specifically methylates the N4 position of cytidine in position 1402 (C1402) of 16S rRNA. This is Ribosomal RNA small subunit methyltransferase H from Clostridium botulinum (strain Alaska E43 / Type E3).